Here is a 232-residue protein sequence, read N- to C-terminus: Ribonuclease 3 (232 aa).

An RNase III domain is found at Q6 to G135. Residue E48 participates in Mg(2+) binding. D52 is an active-site residue. Mg(2+) contacts are provided by D121 and E124. E124 is a catalytic residue. Residues D161–M230 form the DRBM domain.

Belongs to the ribonuclease III family. In terms of assembly, homodimer. Requires Mg(2+) as cofactor.

The protein resides in the cytoplasm. It carries out the reaction Endonucleolytic cleavage to 5'-phosphomonoester.. Functionally, digests double-stranded RNA. Involved in the processing of primary rRNA transcript to yield the immediate precursors to the large and small rRNAs (23S and 16S). Processes some mRNAs, and tRNAs when they are encoded in the rRNA operon. Processes pre-crRNA and tracrRNA of type II CRISPR loci if present in the organism. In Limosilactobacillus fermentum (strain NBRC 3956 / LMG 18251) (Lactobacillus fermentum), this protein is Ribonuclease 3.